Here is a 102-residue protein sequence, read N- to C-terminus: UPF0235 protein Noc_3000 (102 aa).

Belongs to the UPF0235 family.

The polypeptide is UPF0235 protein Noc_3000 (Nitrosococcus oceani (strain ATCC 19707 / BCRC 17464 / JCM 30415 / NCIMB 11848 / C-107)).